The sequence spans 389 residues: MKINYPLLALAIGAFGIGTTEFSPMGLLPVIARGVDVSIPAAGMLISAYAVGVMVGAPLMTLLLSHRARRSALIFLMAIFTLGNVLSAIAPDYMTLMLSRILTSLNHGAFFGLGSVVAASVVPKHKQASAVATMFMGLTLANIGGVPAATWLGETIGWRMSFLATAGLGVISMVSLFFSLPKGGAGARPEVKKELAVLMRPQVLSALLTTVLGAGAMFTLYTYISPVLQSITHATPVFVTAMLVLIGVGFSIGNYLGGKLADRSVNGTLKGFLLLLMVIMLAIPFLARNEFGAAISMVVWGAATFAVVPPLQMRVMRVASEAPGLSSSVNIGAFNLGNALGAAAGGAVISAGLGYSFVPVMGAIVAGLALLLVFMSARKQPETVCVANS.

Residues 1-6 (MKINYP) lie on the Cytoplasmic side of the membrane. The chain crosses the membrane as a helical span at residues 7-27 (LLALAIGAFGIGTTEFSPMGL). At 28–43 (LPVIARGVDVSIPAAG) the chain is on the periplasmic side. A helical membrane pass occupies residues 44 to 64 (MLISAYAVGVMVGAPLMTLLL). Residues 65–70 (SHRARR) lie on the Cytoplasmic side of the membrane. The helical transmembrane segment at 71–91 (SALIFLMAIFTLGNVLSAIAP) threads the bilayer. At 92–100 (DYMTLMLSR) the chain is on the periplasmic side. A helical membrane pass occupies residues 101–121 (ILTSLNHGAFFGLGSVVAASV). Over 122–130 (VPKHKQASA) the chain is Cytoplasmic. The helical transmembrane segment at 131–151 (VATMFMGLTLANIGGVPAATW) threads the bilayer. At 152-159 (LGETIGWR) the chain is on the periplasmic side. Residues 160 to 180 (MSFLATAGLGVISMVSLFFSL) traverse the membrane as a helical segment. Over 181-203 (PKGGAGARPEVKKELAVLMRPQV) the chain is Cytoplasmic. A helical transmembrane segment spans residues 204-224 (LSALLTTVLGAGAMFTLYTYI). Residues 225–236 (SPVLQSITHATP) lie on the Periplasmic side of the membrane. Residues 237-257 (VFVTAMLVLIGVGFSIGNYLG) form a helical membrane-spanning segment. Over 258 to 266 (GKLADRSVN) the chain is Cytoplasmic. A helical transmembrane segment spans residues 267 to 287 (GTLKGFLLLLMVIMLAIPFLA). The Periplasmic portion of the chain corresponds to 288–290 (RNE). Residues 291 to 311 (FGAAISMVVWGAATFAVVPPL) traverse the membrane as a helical segment. The Cytoplasmic portion of the chain corresponds to 312-330 (QMRVMRVASEAPGLSSSVN). A helical membrane pass occupies residues 331 to 351 (IGAFNLGNALGAAAGGAVISA). Residues 352-356 (GLGYS) are Periplasmic-facing. Residues 357 to 377 (FVPVMGAIVAGLALLLVFMSA) form a helical membrane-spanning segment. Residues 378–389 (RKQPETVCVANS) lie on the Cytoplasmic side of the membrane.

This sequence belongs to the major facilitator superfamily.

The protein resides in the cell inner membrane. The polypeptide is Inner membrane transport protein YdhP (ydhP) (Escherichia coli (strain K12)).